The following is a 343-amino-acid chain: N-acetylornithine carbamoyltransferase (343 aa).

Residues 49-52, W77, and R112 each bind carbamoyl phosphate; that span reads SMRT. Residue E144 coordinates N(2)-acetyl-L-ornithine. Residue 148–151 coordinates carbamoyl phosphate; the sequence is HPCQ. K252 and L295 together coordinate N(2)-acetyl-L-ornithine. 294 to 295 lines the carbamoyl phosphate pocket; sequence CL. K302 is modified (N6-carboxylysine). R322 contacts carbamoyl phosphate.

It belongs to the aspartate/ornithine carbamoyltransferase superfamily. AOTCase family. Homotrimer.

Its subcellular location is the cytoplasm. The enzyme catalyses N(2)-acetyl-L-ornithine + carbamoyl phosphate = N(2)-acetyl-L-citrulline + phosphate + H(+). It functions in the pathway amino-acid biosynthesis; L-arginine biosynthesis. Its activity is regulated as follows. Carboxylation at Lys-302 increases the catalytic activity of the enzyme. Catalyzes the transfer of the carbamoyl group from carbamoyl phosphate to the delta-amino group of N(2)-acetyl-L-ornithine to produce N(2)-acetyl-L-citrulline. This is a step in an alternative arginine biosynthesis pathway. The enzyme has no activity with ornithine. The protein is N-acetylornithine carbamoyltransferase of Xanthomonas axonopodis pv. citri (strain 306).